The following is a 194-amino-acid chain: MPPPAWGWGSNPLEPVVHTVAAFSRRLLIAPDAAPDEARLRPLLSLSLSPPPTPPSPPPPPPEVLKKDSKAAPLTKEEVGRATWMLLHTIAAQFPDEPTRQQRRDARELMAIISRLYPCKECAEHFKEVLKANPVQAGSQAEFSQWLCYVHNVVNRSLGKPIFPCQRVNARWGKLDCPERSCDLEGSNDIIPNR.

A disordered region spans residues 44–72 (LSLSLSPPPTPPSPPPPPPEVLKKDSKAA). Residues 49–63 (SPPPTPPSPPPPPPE) are compositionally biased toward pro residues. One can recognise an ERV/ALR sulfhydryl oxidase domain in the interval 72–172 (APLTKEEVGR…FPCQRVNARW (101 aa)). Residues K76, R81, W84, E121, H125, C148, H151, N152, N155, K160, and R171 each contribute to the FAD site. Cysteines 119 and 122 form a disulfide. C148 and C165 are joined by a disulfide. C177 and C182 form a disulfide bridge. The Required for dimerization and substrate specificity signature appears at 177 to 182 (CPERSC).

Homodimer. It depends on FAD as a cofactor. Contains three disulfide bonds; one catalytic disulfide (Cys-119 to Cys-122), one structural disulfide (Cys-148 to Cys-165), and one shuttle disulfide (Cys-177 to Cys-182).

It localises to the mitochondrion. It catalyses the reaction 2 R'C(R)SH + O2 = R'C(R)S-S(R)CR' + H2O2. In terms of biological role, FAD-dependent sulfhydryl oxidase that catalyzes disulfide bond formation. Oxidizes thioredoxin in vitro. Required for the import and folding of small cysteine-containing proteins in the mitochondrial intermembrane space, and can act independently of the oxidoreductase MIA40. Can oxidize the cytochrome c oxidase assembly protein COX19, a typical substrate of MIA40. This is FAD-linked sulfhydryl oxidase ERV1 from Oryza sativa subsp. japonica (Rice).